The chain runs to 292 residues: Acetylglutamate kinase (292 aa).

Substrate contacts are provided by residues glycine 64 to glycine 65, arginine 86, and asparagine 190.

The protein belongs to the acetylglutamate kinase family. ArgB subfamily.

It is found in the cytoplasm. It catalyses the reaction N-acetyl-L-glutamate + ATP = N-acetyl-L-glutamyl 5-phosphate + ADP. The protein operates within amino-acid biosynthesis; L-arginine biosynthesis; N(2)-acetyl-L-ornithine from L-glutamate: step 2/4. Catalyzes the ATP-dependent phosphorylation of N-acetyl-L-glutamate. The chain is Acetylglutamate kinase from Geobacter sp. (strain M21).